A 256-amino-acid polypeptide reads, in one-letter code: Small ribosomal subunit protein uS2 (256 aa).

It belongs to the universal ribosomal protein uS2 family.

The protein is Small ribosomal subunit protein uS2 of Brucella melitensis biotype 1 (strain ATCC 23456 / CCUG 17765 / NCTC 10094 / 16M).